A 444-amino-acid chain; its full sequence is Trigger factor (444 aa).

A PPIase FKBP-type domain is found at 166–251 (GDQVVIDFKG…VKAVKAPKAA (86 aa)).

Belongs to the FKBP-type PPIase family. Tig subfamily.

It is found in the cytoplasm. It catalyses the reaction [protein]-peptidylproline (omega=180) = [protein]-peptidylproline (omega=0). Involved in protein export. Acts as a chaperone by maintaining the newly synthesized protein in an open conformation. Functions as a peptidyl-prolyl cis-trans isomerase. The polypeptide is Trigger factor (Cereibacter sphaeroides (strain ATCC 17029 / ATH 2.4.9) (Rhodobacter sphaeroides)).